The following is a 147-amino-acid chain: Augurin (147 aa).

A signal peptide spans 1–31; sequence MANSSARPAFLVMTALALLLLLCVGPGGISG. 2 consecutive propeptides follow at residues 32–68 and 132–147; these read NKLK…LRRP and SAHS…YDDY.

This sequence belongs to the augurin family.

It localises to the secreted. It is found in the cytoplasm. The protein resides in the apical cell membrane. In terms of biological role, probable hormone that may attenuate cell proliferation and induce senescence of oligodendrocyte and neural precursor cells in the central nervous system. ECRG4-induced senescence is characterized by G1 arrest, RB1 dephosphorylation and accelerated CCND1 and CCND3 proteasomal degradation. The chain is Augurin from Bos taurus (Bovine).